A 104-amino-acid polypeptide reads, in one-letter code: Small ribosomal subunit protein bS18c (104 aa).

Belongs to the bacterial ribosomal protein bS18 family. Part of the 30S ribosomal subunit.

It is found in the plastid. The protein resides in the chloroplast. The sequence is that of Small ribosomal subunit protein bS18c from Lotus japonicus (Lotus corniculatus var. japonicus).